Here is a 534-residue protein sequence, read N- to C-terminus: MKLTLWTYEGPPHVGAMRVATGMTGMHYVLHAPQGDTYADLLFTMIERRGKRPPVSYTTFQARDLGSDTAELFQSACRDAYERFQPQAIMVGSSCTAELIQDDTGGLADALSLPVPVVHLELPSYQRKENFGADESFLQICRKLARPMERTEKVSCNLLGPTALGFRHRDDILEVTRLLEGMGIAVNAVAPMGASPADIARLGAAHFNVLLYPETGESAARWAEKTLKQPYTKTVPIGVGATRDFVAEVAALAGVAPVADDSRLRQPWWSASVDSTYLTGKRVFLFGDATHVIAAARVARDEMGFEVVGMGCYNREFARPMRAAAKGYGLEALVTDDYLEVEEAIQALAPELILGTQMERHIAKRLGIPCAVISAPVHVQDFPARYSPQMGFEGANVLFDTWIHPLTMGLEEHLLTMFREDFEFHDEAGPSHHGGKAVPASAPRADEAAEALPLTGAETAEGGSIPPEAVPPAEAAEAPAGEIVWLTDAERELKKIPFFVRGKARRNTEKFAAEKGLTRISLETLYEAKAHYAR.

Asp-36 is a binding site for [4Fe-4S] cluster. Residue Asp-274 is the Proton donor of the active site. 409-410 (GL) serves as a coordination point for substrate. Residues 426 to 446 (DEAGPSHHGGKAVPASAPRAD) are disordered.

This sequence belongs to the ChlB/BchB/BchZ family. Protochlorophyllide reductase is composed of three subunits; BchL, BchN and BchB. Forms a heterotetramer of two BchB and two BchN subunits. It depends on [4Fe-4S] cluster as a cofactor.

It catalyses the reaction chlorophyllide a + oxidized 2[4Fe-4S]-[ferredoxin] + 2 ADP + 2 phosphate = protochlorophyllide a + reduced 2[4Fe-4S]-[ferredoxin] + 2 ATP + 2 H2O. It functions in the pathway porphyrin-containing compound metabolism; bacteriochlorophyll biosynthesis (light-independent). Its function is as follows. Component of the dark-operative protochlorophyllide reductase (DPOR) that uses Mg-ATP and reduced ferredoxin to reduce ring D of protochlorophyllide (Pchlide) to form chlorophyllide a (Chlide). This reaction is light-independent. The NB-protein (BchN-BchB) is the catalytic component of the complex. The sequence is that of Light-independent protochlorophyllide reductase subunit B from Cereibacter sphaeroides (strain ATCC 17029 / ATH 2.4.9) (Rhodobacter sphaeroides).